Here is a 315-residue protein sequence, read N- to C-terminus: Protein MFI (315 aa).

As to quaternary structure, can homodimerize. Interacts with MFF; the interaction inhibits MFF interaction with DNM1L. As to expression, enriched in the pancreatic beta cell and the testis and is expressed at low levels in other tissues tested.

The protein localises to the cytoplasm. The protein resides in the cytosol. It localises to the mitochondrion outer membrane. Acts as an inhibitor of mitochondrial fission. Interacts with MFF and prevents DNM1L recruitment to mitochondria, promoting a more fused mitochondrial network. The chain is Protein MFI from Mus musculus (Mouse).